An 83-amino-acid polypeptide reads, in one-letter code: Mu-theraphotoxin-Hhn2g (83 aa).

Residues 1–21 form the signal peptide; it reads MKASMYLALAGLVLLFVVGYA. Residues 22-48 constitute a propeptide that is removed on maturation; it reads SESEEKEFPRELLSKIFAVDDFKGEER. 2 cysteine pairs are disulfide-bonded: cysteine 50–cysteine 65 and cysteine 57–cysteine 70. Leucine amide is present on leucine 81.

The protein belongs to the neurotoxin 10 (Hwtx-1) family. 15 (Hntx-3) subfamily. Monomer. Expressed by the venom gland.

Its subcellular location is the secreted. In terms of biological role, lethal neurotoxin. Selectively blocks tetrodotoxin-sensitive voltage-gated sodium channels (Nav). Does not affect tetrodotoxin-resistant voltage-gated sodium channels or calcium channels. The chain is Mu-theraphotoxin-Hhn2g from Cyriopagopus hainanus (Chinese bird spider).